The sequence spans 276 residues: Urease accessory protein UreD (276 aa).

This sequence belongs to the UreD family. As to quaternary structure, ureD, UreF and UreG form a complex that acts as a GTP-hydrolysis-dependent molecular chaperone, activating the urease apoprotein by helping to assemble the nickel containing metallocenter of UreC. The UreE protein probably delivers the nickel.

The protein resides in the cytoplasm. Required for maturation of urease via the functional incorporation of the urease nickel metallocenter. The protein is Urease accessory protein UreD of Paracidovorax citrulli (strain AAC00-1) (Acidovorax citrulli).